The primary structure comprises 470 residues: ATP synthase subunit beta (470 aa).

Residue glycine 158 to threonine 165 participates in ATP binding.

The protein belongs to the ATPase alpha/beta chains family. F-type ATPases have 2 components, CF(1) - the catalytic core - and CF(0) - the membrane proton channel. CF(1) has five subunits: alpha(3), beta(3), gamma(1), delta(1), epsilon(1). CF(0) has three main subunits: a(1), b(2) and c(9-12). The alpha and beta chains form an alternating ring which encloses part of the gamma chain. CF(1) is attached to CF(0) by a central stalk formed by the gamma and epsilon chains, while a peripheral stalk is formed by the delta and b chains.

Its subcellular location is the cell membrane. It catalyses the reaction ATP + H2O + 4 H(+)(in) = ADP + phosphate + 5 H(+)(out). In terms of biological role, produces ATP from ADP in the presence of a proton gradient across the membrane. The catalytic sites are hosted primarily by the beta subunits. This Halalkalibacterium halodurans (strain ATCC BAA-125 / DSM 18197 / FERM 7344 / JCM 9153 / C-125) (Bacillus halodurans) protein is ATP synthase subunit beta.